The chain runs to 510 residues: ATP synthase subunit alpha (510 aa).

169-176 (GDRQTGKT) contacts ATP.

This sequence belongs to the ATPase alpha/beta chains family. F-type ATPases have 2 components, CF(1) - the catalytic core - and CF(0) - the membrane proton channel. CF(1) has five subunits: alpha(3), beta(3), gamma(1), delta(1), epsilon(1). CF(0) has four main subunits: a(1), b(1), b'(1) and c(9-12).

The protein localises to the cell inner membrane. The enzyme catalyses ATP + H2O + 4 H(+)(in) = ADP + phosphate + 5 H(+)(out). Its function is as follows. Produces ATP from ADP in the presence of a proton gradient across the membrane. The alpha chain is a regulatory subunit. This Rhodopseudomonas palustris (strain BisB5) protein is ATP synthase subunit alpha.